The chain runs to 957 residues: Iron-responsive element-binding protein 2 (957 aa).

[4Fe-4S] cluster contacts are provided by cysteine 506, cysteine 572, and cysteine 575.

The protein belongs to the aconitase/IPM isomerase family. The cofactor is [4Fe-4S] cluster. Ubiquitinated and degraded by the proteasome in presence of high level of iron and oxygen.

Its subcellular location is the cytoplasm. In terms of biological role, RNA-binding protein that binds to iron-responsive elements (IRES), which are stem-loop structures found in the 5'-UTR of ferritin, and delta aminolevulinic acid synthase mRNAs, and in the 3'-UTR of transferrin receptor mRNA. Binding to the IRE element in ferritin results in the repression of its mRNA translation. Binding of the protein to the transferrin receptor mRNA inhibits the degradation of this otherwise rapidly degraded mRNA. The chain is Iron-responsive element-binding protein 2 (ireb2) from Xenopus tropicalis (Western clawed frog).